The following is a 450-amino-acid chain: MRCIVLAAGMGVRMNSKYAKVTHTVCGKPMIRWILDTVLNLLDKVCVVVGHDADSVKKLLPENVEVVHQSQQLGTGHAVMSARNFIDPADNLLILYGDMPLITEGTIQKIINSHNLSNCDATVVSVEMNDPTGYGRIVRDKSGKFVKIVEESEASNREKAIVEVNTGVYIFNGRKLLEVLPMINCKNKKGEYYLTDVFAFLERVNIYKSERSCEFIGINNRIQLAQAEKFRRQWILEELMIKGVTIVDPETTYIDADVKIGRDSIIYPMSFIHGDTKIGEDCIIGPMTRIIDSYIGDRVTIVRSECKGARIMSDVSVGPFSRLREGTVLCNGVKIGNFVEIKNSEIDQNTKAQHLTYLGDAVVGKSVNIGAGTITCNFDGKRKNQTVIEDEVFIGSNTALVAPVKVEKGAFVAAGSTINRNVPAWSLAIARARQEIKLNWVIDKRKKEED.

Positions 1–221 (MRCIVLAAGM…SCEFIGINNR (221 aa)) are pyrophosphorylase. Residues 6 to 9 (LAAG), Lys20, Gln69, 74 to 75 (GT), 96 to 98 (YGD), Gly135, Glu150, Asn165, and Asn219 each bind UDP-N-acetyl-alpha-D-glucosamine. Asp98 lines the Mg(2+) pocket. Residue Asn219 participates in Mg(2+) binding. The linker stretch occupies residues 222 to 242 (IQLAQAEKFRRQWILEELMIK). Residues 243-450 (GVTIVDPETT…VIDKRKKEED (208 aa)) are N-acetyltransferase. Positions 324 and 342 each coordinate UDP-N-acetyl-alpha-D-glucosamine. His354 serves as the catalytic Proton acceptor. 2 residues coordinate UDP-N-acetyl-alpha-D-glucosamine: Tyr357 and Asn368. Acetyl-CoA is bound by residues Ala371, Ser396, Ala414, and Arg431.

The protein in the N-terminal section; belongs to the N-acetylglucosamine-1-phosphate uridyltransferase family. In the C-terminal section; belongs to the transferase hexapeptide repeat family. Homotrimer. The cofactor is Mg(2+).

It is found in the cytoplasm. It catalyses the reaction alpha-D-glucosamine 1-phosphate + acetyl-CoA = N-acetyl-alpha-D-glucosamine 1-phosphate + CoA + H(+). It carries out the reaction N-acetyl-alpha-D-glucosamine 1-phosphate + UTP + H(+) = UDP-N-acetyl-alpha-D-glucosamine + diphosphate. Its pathway is nucleotide-sugar biosynthesis; UDP-N-acetyl-alpha-D-glucosamine biosynthesis; N-acetyl-alpha-D-glucosamine 1-phosphate from alpha-D-glucosamine 6-phosphate (route II): step 2/2. It functions in the pathway nucleotide-sugar biosynthesis; UDP-N-acetyl-alpha-D-glucosamine biosynthesis; UDP-N-acetyl-alpha-D-glucosamine from N-acetyl-alpha-D-glucosamine 1-phosphate: step 1/1. It participates in bacterial outer membrane biogenesis; LPS lipid A biosynthesis. Functionally, catalyzes the last two sequential reactions in the de novo biosynthetic pathway for UDP-N-acetylglucosamine (UDP-GlcNAc). The C-terminal domain catalyzes the transfer of acetyl group from acetyl coenzyme A to glucosamine-1-phosphate (GlcN-1-P) to produce N-acetylglucosamine-1-phosphate (GlcNAc-1-P), which is converted into UDP-GlcNAc by the transfer of uridine 5-monophosphate (from uridine 5-triphosphate), a reaction catalyzed by the N-terminal domain. The chain is Bifunctional protein GlmU from Pseudothermotoga lettingae (strain ATCC BAA-301 / DSM 14385 / NBRC 107922 / TMO) (Thermotoga lettingae).